The primary structure comprises 493 residues: Solute carrier family 2, facilitated glucose transporter member 3 (493 aa).

The Cytoplasmic segment spans residues 1-10 (MGTTKVTPSL). The chain crosses the membrane as a helical span at residues 11–32 (VFAVTVATIGSFQFGYNTGVIN). Over 33–64 (APETILKDFLNYTLEERLEDLPSEGLLTALWS) the chain is Extracellular. N-linked (GlcNAc...) asparagine glycosylation is present at asparagine 43. A helical transmembrane segment spans residues 65-85 (LCVAIFSVGGMIGSFSVGLFV). Topologically, residues 86–90 (NRFGR) are cytoplasmic. A helical transmembrane segment spans residues 91-111 (RNSMLLVNLLAIIAGCLMGFA). Topologically, residues 112 to 118 (KIAESVE) are extracellular. A helical membrane pass occupies residues 119–142 (MLILGRLLIGIFCGLCTGFVPMYI). Over 143–153 (GEVSPTALRGA) the chain is Cytoplasmic. Residues 154 to 174 (FGTLNQLGIVVGILVAQIFGL) form a helical membrane-spanning segment. Position 159 (glutamine 159) interacts with D-glucose. Topologically, residues 175–183 (DFILGSEEL) are extracellular. Residues 184-204 (WPGLLGLTIIPAILQSAALPF) traverse the membrane as a helical segment. At 205–269 (CPESPRFLLI…LFRSPNYVQP (65 aa)) the chain is on the cytoplasmic side. Residue threonine 232 is modified to Phosphothreonine. A helical membrane pass occupies residues 270-290 (LLISIVLQLSQQLSGINAVFY). The tract at residues 277–279 (QLS) is important for selectivity against fructose. D-glucose is bound by residues 280–281 (QQ) and asparagine 286. The Extracellular portion of the chain corresponds to 291 to 304 (YSTGIFKDAGVQEP). The helical transmembrane segment at 305-325 (IYATIGAGVVNTIFTVVSLFL) threads the bilayer. D-glucose is bound at residue asparagine 315. At 326 to 331 (VERAGR) the chain is on the cytoplasmic side. The helical transmembrane segment at 332-352 (RTLHMIGLGGMAVCSVFMTIS) threads the bilayer. Topologically, residues 353–363 (LLLKDDYEAMS) are extracellular. The helical transmembrane segment at 364–389 (FVCIVAILIYVAFFEIGPGPIPWFIV) threads the bilayer. Residues glutamate 378 and tryptophan 386 each contribute to the D-glucose site. Residues 390-399 (AELFSQGPRP) are Cytoplasmic-facing. The helical transmembrane segment at 400–420 (AAIAVAGCCNWTSNFLVGMLF) threads the bilayer. The Extracellular segment spans residues 421–429 (PSAAAYLGA). A helical membrane pass occupies residues 430–450 (YVFIIFAAFLIFFLIFTFFKV). Over 451–493 (PETKGRTFEDIARAFEGQAHSGKGPAGVELNSMQPVKETPGNA) the chain is Cytoplasmic. Positions 469 to 493 (AHSGKGPAGVELNSMQPVKETPGNA) are disordered. Residues serine 471 and serine 482 each carry the phosphoserine modification. Threonine 489 carries the post-translational modification Phosphothreonine.

Belongs to the major facilitator superfamily. Sugar transporter (TC 2.A.1.1) family. Glucose transporter subfamily. Interacts with SMIM43; the interaction may promote SLC2A3-mediated glucose transport to meet the energy needs of mesendoderm differentiation. In terms of tissue distribution, expressed in spermatozoa (at protein level). Detected in brain (at protein level). Abundantly expressed in the hippocampus, cerebellum and cerebral cortex with lower expression in the dentate gyrus and piriform cortex.

It is found in the cell membrane. The protein resides in the perikaryon. Its subcellular location is the cell projection. It carries out the reaction D-glucose(out) = D-glucose(in). The catalysed reaction is D-galactose(in) = D-galactose(out). Deoxyglucose transport is inhibited by D-glucose, D-galactose and maltose. Galactose transport is inhibited by D-glucose and maltose. In terms of biological role, facilitative glucose transporter. Can also mediate the uptake of various other monosaccharides across the cell membrane. Mediates the uptake of glucose, 2-deoxyglucose, galactose, mannose, xylose and fucose, and probably also dehydroascorbate. Does not mediate fructose transport. Required for mesendoderm differentiation. The sequence is that of Solute carrier family 2, facilitated glucose transporter member 3 from Mus musculus (Mouse).